The chain runs to 268 residues: Tryptophan synthase alpha chain (268 aa).

Active-site proton acceptor residues include Glu40 and Asp51.

The protein belongs to the TrpA family. In terms of assembly, tetramer of two alpha and two beta chains.

It carries out the reaction (1S,2R)-1-C-(indol-3-yl)glycerol 3-phosphate + L-serine = D-glyceraldehyde 3-phosphate + L-tryptophan + H2O. Its pathway is amino-acid biosynthesis; L-tryptophan biosynthesis; L-tryptophan from chorismate: step 5/5. The alpha subunit is responsible for the aldol cleavage of indoleglycerol phosphate to indole and glyceraldehyde 3-phosphate. The protein is Tryptophan synthase alpha chain of Geobacillus kaustophilus (strain HTA426).